Consider the following 544-residue polypeptide: Chaperonin GroEL 2 (544 aa).

ATP contacts are provided by residues 29 to 32, 86 to 90, G413, 479 to 481, and D495; these read TLGP, DGTTT, and NAA.

It belongs to the chaperonin (HSP60) family. Forms a cylinder of 14 subunits composed of two heptameric rings stacked back-to-back. Interacts with the co-chaperonin GroES.

The protein resides in the cytoplasm. It catalyses the reaction ATP + H2O + a folded polypeptide = ADP + phosphate + an unfolded polypeptide.. Its function is as follows. Together with its co-chaperonin GroES, plays an essential role in assisting protein folding. The GroEL-GroES system forms a nano-cage that allows encapsulation of the non-native substrate proteins and provides a physical environment optimized to promote and accelerate protein folding. The sequence is that of Chaperonin GroEL 2 from Synechococcus sp. (strain WH7803).